The chain runs to 338 residues: Glycerol-3-phosphate dehydrogenase [NAD(P)+] (338 aa).

NADPH is bound by residues S14, Y15, H35, and K109. Sn-glycerol 3-phosphate is bound by residues K109, G138, and T140. Residue A142 participates in NADPH binding. The sn-glycerol 3-phosphate site is built by K194, D247, S257, R258, and N259. Residue K194 is the Proton acceptor of the active site. R258 contributes to the NADPH binding site. V282 and E284 together coordinate NADPH.

Belongs to the NAD-dependent glycerol-3-phosphate dehydrogenase family.

The protein resides in the cytoplasm. The catalysed reaction is sn-glycerol 3-phosphate + NAD(+) = dihydroxyacetone phosphate + NADH + H(+). It carries out the reaction sn-glycerol 3-phosphate + NADP(+) = dihydroxyacetone phosphate + NADPH + H(+). It functions in the pathway membrane lipid metabolism; glycerophospholipid metabolism. Functionally, catalyzes the reduction of the glycolytic intermediate dihydroxyacetone phosphate (DHAP) to sn-glycerol 3-phosphate (G3P), the key precursor for phospholipid synthesis. The sequence is that of Glycerol-3-phosphate dehydrogenase [NAD(P)+] from Shewanella frigidimarina (strain NCIMB 400).